Reading from the N-terminus, the 372-residue chain is MATSPQKSPLVPKSPTPKSPPSRKKDDSFLGKLGGTLARRKKAKEVSEFQEEGMNAINLPLSPISFELDPEDTLLEENEVRTMVDPNSRNDPKLQELMKVLIDWINDVLVGERIIVKDLAEDLYDGQVLQKLFEKLESEKLNVAEVTQSEIAQKQKLQTVLEKINETLKLPPRSIKWNVDSVHAKNLVAILHLLVALSQYFRAPIRLPDHVSIQVVVVQKREGILQSRQIQEEITGNTEALSGRHERDAFDTLFDHAPDKLNVVKKTLITFVNKHLNKLNLEVTELETQFADGVYLVLLMGLLEGYFVPLHSFFLTPDSFEQKVLNVSFAFELMQDGGLEKPKPRPEDIVNCDLKSTLRVLYNLFTKYRNVE.

A disordered region spans residues 1 to 31 (MATSPQKSPLVPKSPTPKSPPSRKKDDSFLG). N-acetylalanine is present on A2. Phosphoserine occurs at positions 8, 14, and 19. The tract at residues 21 to 25 (PSRKK) is interaction with ARHGAP31. Phosphoserine occurs at positions 28 and 62. Calponin-homology (CH) domains lie at 95–202 (QELM…QYFR) and 262–369 (NVVK…TKYR). A required for interaction with TESK1 and ILK region spans residues 223–372 (GILQSRQIQE…NLFTKYRNVE (150 aa)).

The protein belongs to the parvin family. In terms of assembly, component of the heterotrimeric IPP (ILK-PINCH-PARVIN) complex composed of ILK, LIMS1/PINCH and PARVA; the complex binds to F-actin via the C-terminal tail of LIMS1 and the N-terminal region of PARVA, promoting F-actin filament bundling. Interacts with TGFB1I1. Interacts with ARHGAP31. Interacts with the actin cytoskeleton. Interacts (via C-terminus) with TESK1 (via C-terminus); the interaction inhibits TESK1 kinase activity. Interacts with PXN/PAXILLIN (via LD motif 4).

Its subcellular location is the cell junction. The protein resides in the focal adhesion. It localises to the cell membrane. The protein localises to the cytoplasm. It is found in the cytoskeleton. Its subcellular location is the myofibril. The protein resides in the sarcomere. It localises to the z line. Its function is as follows. Plays a role in sarcomere organization and in smooth muscle cell contraction. Required for normal development of the embryonic cardiovascular system, and for normal septation of the heart outflow tract. Plays a role in sprouting angiogenesis and is required for normal adhesion of vascular smooth muscle cells to endothelial cells during blood vessel development. Plays a role in the reorganization of the actin cytoskeleton, formation of lamellipodia and ciliogenesis. Plays a role in the establishment of cell polarity, cell adhesion, cell spreading, and directed cell migration. Within the IPP (ILK-PINCH-PARVIN) complex, binds to F-actin, promoting F-actin bundling, a process required to generate force for actin cytoskeleton reorganization and subsequent dynamic cell adhesion events such as cell spreading and migration. This is Alpha-parvin (Parva) from Mus musculus (Mouse).